Consider the following 270-residue polypeptide: MPELPEVETTLKGVSPYLKGFIIEKIVVRNPKLRWEVSKELSTFKHVKILNLTRRAKYLIIHTEQGYIIGHLGMSGSVRIVPHDNPVNKHDHFDIVMNNGKLLRYNDARRFGAWLWTNNLSEFHLFFKLGPEPLSETFNSTYLFKKSRQKSTALKTFLMDNSVVVGVGNIYANEILFLCGLHPQKIAKTLTKKQTEQLVFTIKQVLNEAIEQGGTTLKDFLQPDGRPGYFAQKLLVYGNKDKPCPRCGTKIKSIIIGQRNSFFCPQCQKK.

Proline 2 functions as the Schiff-base intermediate with DNA in the catalytic mechanism. The active-site Proton donor is glutamate 3. Residue lysine 57 is the Proton donor; for beta-elimination activity of the active site. 3 residues coordinate DNA: histidine 90, arginine 109, and lysine 150. The FPG-type zinc finger occupies 235-269; it reads LVYGNKDKPCPRCGTKIKSIIIGQRNSFFCPQCQK. Arginine 259 (proton donor; for delta-elimination activity) is an active-site residue.

It belongs to the FPG family. As to quaternary structure, monomer. It depends on Zn(2+) as a cofactor.

It catalyses the reaction Hydrolysis of DNA containing ring-opened 7-methylguanine residues, releasing 2,6-diamino-4-hydroxy-5-(N-methyl)formamidopyrimidine.. The enzyme catalyses 2'-deoxyribonucleotide-(2'-deoxyribose 5'-phosphate)-2'-deoxyribonucleotide-DNA = a 3'-end 2'-deoxyribonucleotide-(2,3-dehydro-2,3-deoxyribose 5'-phosphate)-DNA + a 5'-end 5'-phospho-2'-deoxyribonucleoside-DNA + H(+). In terms of biological role, involved in base excision repair of DNA damaged by oxidation or by mutagenic agents. Acts as a DNA glycosylase that recognizes and removes damaged bases. Has a preference for oxidized purines, such as 7,8-dihydro-8-oxoguanine (8-oxoG). Has AP (apurinic/apyrimidinic) lyase activity and introduces nicks in the DNA strand. Cleaves the DNA backbone by beta-delta elimination to generate a single-strand break at the site of the removed base with both 3'- and 5'-phosphates. This Histophilus somni (strain 2336) (Haemophilus somnus) protein is Formamidopyrimidine-DNA glycosylase.